The following is a 414-amino-acid chain: 2,3-diketo-5-methylthiopentyl-1-phosphate enolase (414 aa).

Catalysis depends on K99, which acts as the Proton acceptor. Substrate-binding positions include K148, 174 to 177 (KDDE), H265, G338, and 360 to 361 (GG). Positions 174, 176, and 177 each coordinate Mg(2+). N6-carboxylysine is present on K174.

The protein belongs to the RuBisCO large chain family. Type IV subfamily. Homodimer. The cofactor is Mg(2+).

It catalyses the reaction 5-methylsulfanyl-2,3-dioxopentyl phosphate = 2-hydroxy-5-methylsulfanyl-3-oxopent-1-enyl phosphate. Its pathway is amino-acid biosynthesis; L-methionine biosynthesis via salvage pathway; L-methionine from S-methyl-5-thio-alpha-D-ribose 1-phosphate: step 3/6. Its function is as follows. Catalyzes the enolization of 2,3-diketo-5-methylthiopentyl-1-phosphate (DK-MTP-1-P) into 2-hydroxy-3-keto-5-methylthiopentenyl-1-phosphate (HK-MTPenyl-1-P). This Bacillus cereus (strain AH820) protein is 2,3-diketo-5-methylthiopentyl-1-phosphate enolase.